Reading from the N-terminus, the 325-residue chain is Protein TMED8 (325 aa).

The interval 1 to 78 is disordered; sequence MSDLQAAEGP…MVSPVSKDAT (78 aa). Positions 159–323 constitute a GOLD domain; the sequence is PPCIWTFAKV…NKTLYFHIYY (165 aa). Lys169 bears the N6-acetyllysine mark. Residues 232–267 are disordered; sequence TVQVSDSSDDEDEEEEEEEEIEEPVPAGDVERGSRS. Residues 238–254 show a composition bias toward acidic residues; that stretch reads SSDDEDEEEEEEEEIEE.

The sequence is that of Protein TMED8 (TMED8) from Homo sapiens (Human).